The following is a 320-amino-acid chain: 3'-5' exoribonuclease YhaM (320 aa).

Positions 18–90 (FLIKSATKAV…QLKIGSIRPT (73 aa)) form a DNA-binding region, OB. Residues 163 to 279 (HVVCMLNVAK…LHMIDNIDAK (117 aa)) form the HD domain.

Belongs to the YhaM family.

Shows a 3'-5' exoribonuclease activity. The polypeptide is 3'-5' exoribonuclease YhaM (Halalkalibacterium halodurans (strain ATCC BAA-125 / DSM 18197 / FERM 7344 / JCM 9153 / C-125) (Bacillus halodurans)).